A 72-amino-acid chain; its full sequence is Translation initiation factor IF-1 (72 aa).

Residues 1–72 (MAKEDVIEVE…TRGRITYRYK (72 aa)) enclose the S1-like domain. Y60 carries the post-translational modification Phosphotyrosine.

This sequence belongs to the IF-1 family. As to quaternary structure, component of the 30S ribosomal translation pre-initiation complex which assembles on the 30S ribosome in the order IF-2 and IF-3, IF-1 and N-formylmethionyl-tRNA(fMet); mRNA recruitment can occur at any time during PIC assembly.

The protein localises to the cytoplasm. Functionally, one of the essential components for the initiation of protein synthesis. Stabilizes the binding of IF-2 and IF-3 on the 30S subunit to which N-formylmethionyl-tRNA(fMet) subsequently binds. Helps modulate mRNA selection, yielding the 30S pre-initiation complex (PIC). Upon addition of the 50S ribosomal subunit IF-1, IF-2 and IF-3 are released leaving the mature 70S translation initiation complex. This chain is Translation initiation factor IF-1, found in Shouchella clausii (strain KSM-K16) (Alkalihalobacillus clausii).